A 187-amino-acid polypeptide reads, in one-letter code: Putative protein SSX8 (187 aa).

Disordered stretches follow at residues 1 to 21 (MNGD…SEKR) and 109 to 187 (PKIM…EDDE). The region spanning 20-83 (KRSKAFNDIA…KQATDFQGNY (64 aa)) is the KRAB-related domain. A Phosphoserine modification is found at serine 123. Basic residues predominate over residues 152–168 (KRSGPKRGRHAWTHRLR).

The protein belongs to the SSX family. As to expression, not detected in any normal or tumor tissues.

In terms of biological role, could act as a modulator of transcription. This chain is Putative protein SSX8, found in Homo sapiens (Human).